A 247-amino-acid chain; its full sequence is tRNA uridine(34) hydroxylase (247 aa).

In terms of domain architecture, Rhodanese spans 124–218; it reads TKQNVIVIDT…YLEDTHNKNN (95 aa). C178 functions as the Cysteine persulfide intermediate in the catalytic mechanism.

The protein belongs to the TrhO family.

The catalysed reaction is uridine(34) in tRNA + AH2 + O2 = 5-hydroxyuridine(34) in tRNA + A + H2O. Functionally, catalyzes oxygen-dependent 5-hydroxyuridine (ho5U) modification at position 34 in tRNAs. This is tRNA uridine(34) hydroxylase from Rickettsia typhi (strain ATCC VR-144 / Wilmington).